Here is a 78-residue protein sequence, read N- to C-terminus: Large ribosomal subunit protein bL28 (78 aa).

The interval Met1 to Ala21 is disordered.

Belongs to the bacterial ribosomal protein bL28 family.

The chain is Large ribosomal subunit protein bL28 from Sodalis glossinidius (strain morsitans).